A 296-amino-acid polypeptide reads, in one-letter code: Origin of replication complex subunit 6 (296 aa).

The tract at residues 212 to 296 (PSKRKHDDDS…MALEVSSAAN (85 aa)) is disordered. Acidic residues predominate over residues 220–236 (DSDSSGESSGDDQDELD). A compositionally biased stretch (polar residues) spans 254 to 264 (WKSSVLSSNKQ).

The protein belongs to the ORC6 family. In terms of assembly, component of the origin recognition complex (ORC) composed of at least ORC1, ORC2, ORC3, ORC4, ORC5 and ORC6. ORC is regulated in a cell-cycle and development dependent manner. It is sequentially assembled at the exit from anaphase of mitosis and disassembled as cells enter S phase.

It is found in the nucleus. Component of the origin recognition complex (ORC) that binds origins of replication. DNA-binding is ATP-dependent. The specific DNA sequences that define origins of replication have not been identified yet. ORC is required to assemble the pre-replication complex necessary to initiate DNA replication. In Oryza sativa subsp. indica (Rice), this protein is Origin of replication complex subunit 6.